A 501-amino-acid chain; its full sequence is MSSPAQPEVPAPLANLKIQYTKIFINNEWHDSVSGKKFPVINPATEEVICHVEEGDKADIDKAVKAARQAFQIGSPWRTMDASERGRLLYKLADLMERDRLLLATLEATNGGKVFASSYLFDLGGCIKALKYCAGWADKVHGQTIPSDGDIFTYTRREPIGVCGQIIPWNFPLLMFIWKIGPALGCGNTVIVKPAEQTPLTALYMASLIKEAGFPPGVVNIVPGYGPTAGAAISSHMDIDKVAFTGSTQVGKLIKEAAGKSNLKRVTLELGGKSPCIVFADADLDTAVEFAHYGVFYHQGQCCVAASRLFVEESIYDEFVRRSVERAKKYVLGNPLNSGINQGPQIDKEQHDKILDLIESGKKEGAKLECGGGRWGNKGYFVQPTVFSNVTDDMRIAKEEIFGPVQQIMKFKSLDDVIKRANNTSYGLAAGVFTKDLDKAITVSSALQAGVVWVNCYMMLSAQCPFGGFKMSGNGRELGEHGIYEYTELKTVAIKISQKNS.

Residue Ser-2 is modified to N-acetylserine. Residues Lys-91 and Lys-128 each carry the N6-acetyllysine modification. NAD(+) is bound by residues 167-170, 193-196, 226-227, and 246-247; these read IPWN, KPAE, GP, and GS. Position 252 is an N6-acetyllysine (Lys-252). Glu-269 functions as the Proton acceptor in the catalytic mechanism. Position 269 to 271 (269 to 271) interacts with NAD(+); that stretch reads ELG. Cys-303 acts as the Nucleophile in catalysis. The interval 336–501 is mediates interaction with PRMT3; that stretch reads LNSGINQGPQ…VAIKISQKNS (166 aa). Residue 349–353 coordinates NAD(+); the sequence is EQHDK. N6-acetyllysine is present on residues Lys-353 and Lys-367. 400 to 402 contributes to the NAD(+) binding site; it reads EIF. Residue Lys-410 is modified to N6-acetyllysine. A Phosphoserine modification is found at Ser-413. N6-acetyllysine occurs at positions 419, 435, and 495.

Belongs to the aldehyde dehydrogenase family. Homotetramer. Interacts with PRMT3; the interaction is direct, inhibits ALDH1A1 aldehyde dehydrogenase activity and is independent of the methyltransferase activity of PRMT3. The N-terminus is blocked most probably by acetylation.

It localises to the cytoplasm. The protein localises to the cytosol. The protein resides in the cell projection. Its subcellular location is the axon. The catalysed reaction is an aldehyde + NAD(+) + H2O = a carboxylate + NADH + 2 H(+). It catalyses the reaction all-trans-retinal + NAD(+) + H2O = all-trans-retinoate + NADH + 2 H(+). It carries out the reaction 9-cis-retinal + NAD(+) + H2O = 9-cis-retinoate + NADH + 2 H(+). The enzyme catalyses 11-cis-retinal + NAD(+) + H2O = 11-cis-retinoate + NADH + 2 H(+). The catalysed reaction is 13-cis-retinal + NAD(+) + H2O = 13-cis-retinoate + NADH + 2 H(+). It catalyses the reaction 3-deoxyglucosone + NAD(+) + H2O = 2-dehydro-3-deoxy-D-gluconate + NADH + 2 H(+). It carries out the reaction (E)-4-hydroxynon-2-enal + NAD(+) + H2O = (E)-4-hydroxynon-2-enoate + NADH + 2 H(+). The enzyme catalyses malonaldehyde + NAD(+) + H2O = 3-oxopropanoate + NADH + 2 H(+). The catalysed reaction is hexanal + NAD(+) + H2O = hexanoate + NADH + 2 H(+). It catalyses the reaction propanal + NAD(+) + H2O = propanoate + NADH + 2 H(+). It carries out the reaction acetaldehyde + NAD(+) + H2O = acetate + NADH + 2 H(+). The enzyme catalyses benzaldehyde + NAD(+) + H2O = benzoate + NADH + 2 H(+). The catalysed reaction is 4-aminobutanal + NAD(+) + H2O = 4-aminobutanoate + NADH + 2 H(+). Its pathway is cofactor metabolism; retinol metabolism. In terms of biological role, cytosolic dehydrogenase that catalyzes the irreversible oxidation of a wide range of aldehydes to their corresponding carboxylic acid. Functions downstream of retinol dehydrogenases and catalyzes the oxidation of retinaldehyde into retinoic acid, the second step in the oxidation of retinol/vitamin A into retinoic acid. This pathway is crucial to control the levels of retinol and retinoic acid, two important molecules which excess can be teratogenic and cytotoxic. Also oxidizes aldehydes resulting from lipid peroxidation like (E)-4-hydroxynon-2-enal/HNE, malonaldehyde and hexanal that form protein adducts and are highly cytotoxic. By participating for instance to the clearance of (E)-4-hydroxynon-2-enal/HNE in the lens epithelium prevents the formation of HNE-protein adducts and lens opacification. Also functions downstream of fructosamine-3-kinase in the fructosamine degradation pathway by catalyzing the oxidation of 3-deoxyglucosone, the carbohydrate product of fructosamine 3-phosphate decomposition, which is itself a potent glycating agent that may react with lysine and arginine side-chains of proteins. Also has an aminobutyraldehyde dehydrogenase activity and is probably part of an alternative pathway for the biosynthesis of GABA/4-aminobutanoate in midbrain, thereby playing a role in GABAergic synaptic transmission. The protein is Aldehyde dehydrogenase 1A1 of Mesocricetus auratus (Golden hamster).